The primary structure comprises 313 residues: Glyoxylate/hydroxypyruvate reductase A (313 aa).

Residue Arg-228 is part of the active site. His-276 acts as the Proton donor in catalysis.

Belongs to the D-isomer specific 2-hydroxyacid dehydrogenase family. GhrA subfamily.

It localises to the cytoplasm. The catalysed reaction is glycolate + NADP(+) = glyoxylate + NADPH + H(+). It carries out the reaction (R)-glycerate + NAD(+) = 3-hydroxypyruvate + NADH + H(+). The enzyme catalyses (R)-glycerate + NADP(+) = 3-hydroxypyruvate + NADPH + H(+). In terms of biological role, catalyzes the NADPH-dependent reduction of glyoxylate and hydroxypyruvate into glycolate and glycerate, respectively. The sequence is that of Glyoxylate/hydroxypyruvate reductase A from Serratia proteamaculans (strain 568).